Reading from the N-terminus, the 271-residue chain is GPN-loop GTPase 3 (271 aa).

Residue 13–18 (GAGKST) participates in GTP binding. The short motif at 70–72 (GPN) is the Gly-Pro-Asn (GPN)-loop; involved in dimer interface element. 173-176 (SKVD) is a GTP binding site.

This sequence belongs to the GPN-loop GTPase family. As to quaternary structure, heterodimers with GPN1 or GPN2. Binds to RNA polymerase II (RNAPII).

Functionally, small GTPase required for proper nuclear import of RNA polymerase II and III (RNAPII and RNAPIII). May act at an RNAP assembly step prior to nuclear import. The polypeptide is GPN-loop GTPase 3 (Eremothecium gossypii (strain ATCC 10895 / CBS 109.51 / FGSC 9923 / NRRL Y-1056) (Yeast)).